Consider the following 1022-residue polypeptide: SAGGISVPGPMGPSGPRGLPGPPGAPGPQGFQGPPGEPGEPGASGPMGPRGPPGPPGKNGDDGEAGKPGRPGERGPPGPQGARGLPGTAGLPGMKGHRGFSGLDGAKGDAGPAGPKGEPGSPGENGAPGQMGPRGLPGERGRPGASGPAGARGNDGAAGAAGPPGPTGPAGPPGFPGAVGAKGEAGPQGARGSEGPQGVRGEPGPPGPAGAAGPAGNPGADGQPGAKGANGAPGIAGAPGFPGARGPSGPQGPSGAPGPKGNSGEPGAPGSKGDTGAKGEPGPTGIQGPPGPAGEEGKRGARGEPGPTGLPGPPGERGGPGSRGFPGADGVAGPKGPAGERGSPGPAGPKGSPGEAGRPGEAGLPGAKGLTGSPGSPGPDGKTGPPGPAGQDGRPGPPGPPGARGQAGVMGFPGPKGAAGEPGKAGERGVPGPPGAVGPAGKDGEAGAQGPPGPAGPAGERGEQGPAGSPGFQGLPGPAGPPGEAGKPGEQGVPGDLGAPGPSGARGERGFPGERGVQGPPGPAGPRGSNGAPGNDGAKGDAGAPGAPGSQGAPGLQGMPGERGAAGLPGPKGDRGDAGPKGADGAPGKDGVRGLTGPIGPPGPAGAPGDKGESGPSGPAGPTGARGAPGDRGEPGPPGPAGFAGPPGADGQPGAKGEPGDAGAKGDAGPPGPAGPTGPPGPIGNVGAPGPKGARGSAGPPGATGFPGAAGRVGPPGPSGNAGPPGPPGPVGKEGGKGPRGETGPAGRPGEVSPPGPPGPTGEKGSPGADGPAGAPGTPGPQGISGQRGVVGLPGQRGERGFPGLPGPSGEPGKQGPSGSSGERGPPGPVGPPGLAGPPGESGREGSPGAEGSPGRDGSPGPKGDRGESGPAGPPGAPGAPGAPGPVGPAGKSGDRGETGPAGPAGPAGPAGARGPAGPQGPRGDKGETGEQGDRGIKGHRGFSGLQGPAGPPGSPGEQGPSGASGPAGPRGPPGSAGSPGKDGLNGLPGPIGPPGPRGRTGDAGPVGPPGPPGPPGPPGPP.

The disordered stretch occupies residues 1-1022 (SAGGISVPGP…PGPPGPPGPP (1022 aa)). 4-hydroxyproline is present on residues proline 20, proline 23, proline 26, proline 35, proline 38, proline 41, proline 56, proline 71, proline 77, proline 86, and proline 92. Low complexity predominate over residues 28-47 (PQGFQGPPGEPGEPGASGPM). Positions 59 to 73 (NGDDGEAGKPGRPGE) are enriched in basic and acidic residues. Position 95 is a 5-hydroxylysine; alternate (lysine 95). Lysine 95 carries an O-linked (Gal...) hydroxylysine; alternate glycan. A Phosphoserine modification is found at serine 101. Residues 109–125 (DAGPAGPKGEPGSPGEN) are compositionally biased toward low complexity. Residues proline 119, proline 122, proline 128, proline 137, proline 143, proline 164, proline 173, proline 176, proline 203, proline 206, proline 218, proline 224, proline 233, proline 239, proline 242, and proline 257 each carry the 4-hydroxyproline modification. Residues 143–161 (PGASGPAGARGNDGAAGAA) show a composition bias toward low complexity. Positions 163–175 (PPGPTGPAGPPGF) are enriched in pro residues. Low complexity predominate over residues 209–259 (AGAAGPAGNPGADGQPGAKGANGAPGIAGAPGFPGARGPSGPQGPSGAPGP). Position 260 is a 5-hydroxylysine (lysine 260). 8 positions are modified to 4-hydroxyproline: proline 266, proline 269, proline 281, proline 290, proline 305, proline 311, proline 320, and proline 326. The span at 315–324 (GERGGPGSRG) shows a compositional bias: gly residues. At lysine 335 the chain carries 5-hydroxylysine. 4-hydroxyproline occurs at positions 344, 353, 359, 365, 374, 377, 386, 395, 401, 413, 422, 431, 434, 452, 470, 476, 482, 488, 494, 500, 512, 521, 533, 545, 548, 554, 560, and 569. Residues 368–394 (KGLTGSPGSPGPDGKTGPPGPAGQDGR) are compositionally biased toward low complexity. The segment covering 403–422 (ARGQAGVMGFPGPKGAAGEP) has biased composition (low complexity). A compositionally biased stretch (low complexity) spans 464–491 (QGPAGSPGFQGLPGPAGPPGEAGKPGEQ). Residues 530 to 557 (NGAPGNDGAKGDAGAPGAPGSQGAPGLQ) show a composition bias toward low complexity. Lysine 581 carries the post-translational modification 5-hydroxylysine. Residues proline 587, proline 602, and proline 608 each carry the 4-hydroxyproline modification. Residues 614 to 628 (SGPSGPAGPTGARGA) show a composition bias toward low complexity. Serine 617 carries the phosphoserine modification. 4-hydroxyproline occurs at positions 629, 635, 638, 647, 653, 671, 680, and 689. The span at 641–668 (AGFAGPPGADGQPGAKGEPGDAGAKGDA) shows a compositional bias: low complexity. The segment covering 670 to 682 (PPGPAGPTGPPGP) has biased composition (pro residues). Lysine 692 is subject to 5-hydroxylysine. A compositionally biased stretch (low complexity) spans 697-713 (SAGPPGATGFPGAAGRV). 4-hydroxyproline occurs at positions 701 and 707. At proline 715 the chain carries 3-hydroxyproline. 16 positions are modified to 4-hydroxyproline: proline 716, proline 725, proline 728, proline 749, proline 758, proline 767, proline 776, proline 794, proline 803, proline 806, proline 812, proline 827, proline 833, proline 839, proline 848, and proline 854. The segment covering 742–751 (ETGPAGRPGE) has biased composition (low complexity). The span at 761–776 (TGEKGSPGADGPAGAP) shows a compositional bias: low complexity. The span at 826–836 (PPGPVGPPGLA) shows a compositional bias: pro residues. The segment covering 838-853 (PPGESGREGSPGAEGS) has biased composition (low complexity). 5-hydroxylysine is present on lysine 863. Residues 872 to 887 (AGPPGAPGAPGAPGPV) show a composition bias toward pro residues. 3 positions are modified to 4-hydroxyproline: proline 875, proline 878, and proline 881. Over residues 908 to 922 (AGPAGARGPAGPQGP) the composition is skewed to low complexity. Basic and acidic residues predominate over residues 923-937 (RGDKGETGEQGDRGI). A 5-hydroxylysine modification is found at lysine 926. Lysine 938 is subject to 5-hydroxylysine; alternate. O-linked (Gal...) hydroxylysine; alternate glycosylation occurs at lysine 938. Residues proline 953, proline 956, proline 974, and proline 989 each carry the 4-hydroxyproline modification. The segment covering 956-989 (PGEQGPSGASGPAGPRGPPGSAGSPGKDGLNGLP) has biased composition (low complexity). A 3-hydroxyproline modification is found at proline 994. 4-hydroxyproline is present on proline 995. Residues 1007–1022 (VGPPGPPGPPGPPGPP) show a composition bias toward pro residues. Proline 1009 carries the post-translational modification 3-hydroxyproline. Proline 1010 is modified (4-hydroxyproline). At proline 1012 the chain carries 3-hydroxyproline. At proline 1013 the chain carries 4-hydroxyproline. Residue proline 1015 is modified to 3-hydroxyproline. A 4-hydroxyproline mark is found at proline 1016, proline 1019, and proline 1022.

This sequence belongs to the fibrillar collagen family. In terms of assembly, trimers of one alpha 2(I) and two alpha 1(I) chains. Post-translationally, prolines at the third position of the tripeptide repeating unit (G-X-Y) are hydroxylated in some or all of the chains. In terms of tissue distribution, expressed in bone.

The protein localises to the secreted. It localises to the extracellular space. The protein resides in the extracellular matrix. Its function is as follows. Type I collagen is a member of group I collagen (fibrillar forming collagen). The polypeptide is Collagen alpha-1(I) chain (Mylodon darwinii (Giant ground sloth)).